The following is a 250-amino-acid chain: MIVFNNVNKVWPNGKQVLKNINLEINKGELVAVIGLSGAGKTTLLKTINKINDISSGEILIDFDKTKEHYEVTKTRGKKLQKLRQKIGLMSQEYNNIANKTVLQNVLNARVSSQKGINKILGFFKREDKMIALNSLDKLNLLDYAYIRADNLSGGQQQRVALARTLAQQPFLIIADEPVSALDPILANQVMKDFKNINKKDGITVIINIHHVDLAKKYATRVIGLNNGEIVFDDVPSKLDAQAMKKIYGE.

The ABC transporter domain maps to 2–247; it reads IVFNNVNKVW…KLDAQAMKKI (246 aa). ATP is bound at residue 35 to 42; that stretch reads GLSGAGKT.

Belongs to the ABC transporter superfamily. Phosphonates importer (TC 3.A.1.9.1) family. As to quaternary structure, the complex is composed of two ATP-binding proteins (PhnC), two transmembrane proteins (PhnE) and a solute-binding protein (PhnD).

The protein localises to the cell membrane. The catalysed reaction is phosphonate(out) + ATP + H2O = phosphonate(in) + ADP + phosphate + H(+). In terms of biological role, part of the ABC transporter complex PhnCDE involved in phosphonates import. Responsible for energy coupling to the transport system. The sequence is that of Phosphonates import ATP-binding protein PhnC from Mycoplasma mycoides subsp. mycoides SC (strain CCUG 32753 / NCTC 10114 / PG1).